We begin with the raw amino-acid sequence, 500 residues long: Protein DETOXIFICATION 29 (500 aa).

Helical transmembrane passes span 67–87 (GAIT…AVSV), 91–111 (VVAG…ETLC), 132–152 (VILN…APIL), 161–181 (ISSA…AYAI), 197–217 (VMAV…WFVI), 227–247 (LAVV…VYIF), 277–297 (AVML…AGYL), 302–322 (ISVA…MIAI), 349–369 (LVAV…LLIF), 393–413 (ILAL…VAVG), 419–439 (VVAY…GLLL), and 449–469 (GIWC…TWMI).

The protein belongs to the multi antimicrobial extrusion (MATE) (TC 2.A.66.1) family.

It localises to the vacuole membrane. This Arabidopsis thaliana (Mouse-ear cress) protein is Protein DETOXIFICATION 29.